Here is a 151-residue protein sequence, read N- to C-terminus: UPF0178 protein GSU0171 (151 aa).

The protein belongs to the UPF0178 family.

In Geobacter sulfurreducens (strain ATCC 51573 / DSM 12127 / PCA), this protein is UPF0178 protein GSU0171.